The following is a 141-amino-acid chain: Protein archease (141 aa).

Ca(2+) contacts are provided by aspartate 19 and aspartate 140.

It belongs to the archease family.

Its function is as follows. Activates the tRNA-splicing ligase complex by facilitating the enzymatic turnover of catalytic subunit RtcB. Acts by promoting the guanylylation of RtcB, a key intermediate step in tRNA ligation. Can also alter the NTP specificity of RtcB such that ATP, dGTP or ITP is used efficiently. This is Protein archease from Thermoplasma acidophilum (strain ATCC 25905 / DSM 1728 / JCM 9062 / NBRC 15155 / AMRC-C165).